The primary structure comprises 486 residues: Keratin-3, type I cytoskeletal 51 kDa (486 aa).

The segment at 1 to 125 (MSNYSIKQSA…AGGMDIFSTN (125 aa)) is head. Residues 126-161 (EKQTMQNLNDRLASYLDKVHALETANTELERKIKEW) are coil 1A. Residues 126-442 (EKQTMQNLND…RLLDGDLSKP (317 aa)) enclose the IF rod domain. The interval 162–184 (YEKQRPGSSSGDGAKDYSKYYTM) is linker 1. A coil 1B region spans residues 185–276 (INDLKNQIIA…KNHEDELKGM (92 aa)). Positions 277–299 (QVTQVGQVNVEMNAAPSSDLTKI) are linker 12. Positions 300–438 (LNDMRSQYED…ETYRRLLDGD (139 aa)) are coil 2. The interval 435-466 (LDGDLSKPKSGGGTSTNTGSTSSKGSTRTVKR) is disordered. Residues 439-486 (LSKPKSGGGTSTNTGSTSSKGSTRTVKRREIIEEVVDGKVVSTKVVDM) form a tail region. The span at 449-461 (STNTGSTSSKGST) shows a compositional bias: low complexity.

This sequence belongs to the intermediate filament family. As to quaternary structure, heterotetramer of two type I and two type II keratins.

The protein is Keratin-3, type I cytoskeletal 51 kDa of Xenopus laevis (African clawed frog).